A 436-amino-acid polypeptide reads, in one-letter code: Succinyl-CoA:glutarate CoA-transferase (436 aa).

A mitochondrion-targeting transit peptide spans methionine 1–alanine 8. Residue aspartate 203 is the Nucleophile of the active site. N6-acetyllysine occurs at positions 392 and 423.

Belongs to the CoA-transferase III family.

The protein localises to the mitochondrion. The catalysed reaction is glutarate + succinyl-CoA = glutaryl-CoA + succinate. It catalyses the reaction 3-hydroxy-3-methylglutarate + succinyl-CoA = (3S)-3-hydroxy-3-methylglutaryl-CoA + succinate. The enzyme catalyses 3-hydroxy-3-methylglutarate + glutaryl-CoA = (3S)-3-hydroxy-3-methylglutaryl-CoA + glutarate. It carries out the reaction hexanedioate + glutaryl-CoA = hexanedioyl-CoA + glutarate. The catalysed reaction is itaconate + glutaryl-CoA = itaconyl-CoA + glutarate. It catalyses the reaction itaconate + succinyl-CoA = itaconyl-CoA + succinate. In terms of biological role, coenzyme A (CoA) transferase that reversibly catalyzes the transfer of a CoA moiety from a dicarboxyl-CoA to a dicarboxylate in a metabolite recycling process. Displays preference for succinyl-CoA and glutarate-CoA as dicarboxyl-CoA donors and glutarate, succinate, adipate/hexanedioate, itaconate and 3-hydroxy-3-methylglutarate as dicarboxylate acceptors. Acts on intermediates or end products of lysine and tryptophan degradation pathway, in particular catalyzes succinyl-CoA-dependent reesterification of free glutarate into glutaryl-CoA to prevent renal excretion of glutarate. Upon inflammation, may convert macrophage-derived itaconate to itaconyl-CoA in erythroid precursors where it negatively regulates the TCA cycle and heme synthesis to limit erythroid differentiation in the context of stress erythropoiesis. The polypeptide is Succinyl-CoA:glutarate CoA-transferase (Mus musculus (Mouse)).